We begin with the raw amino-acid sequence, 404 residues long: Cysteine desulfurase IscS (404 aa).

Pyridoxal 5'-phosphate is bound by residues Ala-75–Thr-76, Asn-155, Gln-183, and Ser-203–His-205. Residue Lys-206 is modified to N6-(pyridoxal phosphate)lysine. Thr-243 contacts pyridoxal 5'-phosphate. The active-site Cysteine persulfide intermediate is the Cys-328. [2Fe-2S] cluster is bound at residue Cys-328.

The protein belongs to the class-V pyridoxal-phosphate-dependent aminotransferase family. NifS/IscS subfamily. Homodimer. Forms a heterotetramer with IscU, interacts with other sulfur acceptors. Pyridoxal 5'-phosphate is required as a cofactor.

The protein localises to the cytoplasm. It carries out the reaction (sulfur carrier)-H + L-cysteine = (sulfur carrier)-SH + L-alanine. The protein operates within cofactor biosynthesis; iron-sulfur cluster biosynthesis. Functionally, master enzyme that delivers sulfur to a number of partners involved in Fe-S cluster assembly, tRNA modification or cofactor biosynthesis. Catalyzes the removal of elemental sulfur atoms from cysteine to produce alanine. Functions as a sulfur delivery protein for Fe-S cluster synthesis onto IscU, an Fe-S scaffold assembly protein, as well as other S acceptor proteins. The protein is Cysteine desulfurase IscS of Shewanella pealeana (strain ATCC 700345 / ANG-SQ1).